Here is a 230-residue protein sequence, read N- to C-terminus: Large ribosomal subunit protein uL1 (230 aa).

It belongs to the universal ribosomal protein uL1 family. Part of the 50S ribosomal subunit.

In terms of biological role, binds directly to 23S rRNA. The L1 stalk is quite mobile in the ribosome, and is involved in E site tRNA release. Its function is as follows. Protein L1 is also a translational repressor protein, it controls the translation of the L11 operon by binding to its mRNA. This Limosilactobacillus reuteri subsp. reuteri (strain JCM 1112) (Lactobacillus reuteri) protein is Large ribosomal subunit protein uL1.